The chain runs to 210 residues: HTH-type transcriptional repressor ComR (210 aa).

One can recognise an HTH tetR-type domain in the interval 18-78 (VFDRDAALDK…AVLDRYIDRF (61 aa)). The H-T-H motif DNA-binding region spans 41-60 (SLADLVEATGAKAPTLYAEF).

Its activity is regulated as follows. Binding to the promoter region of BhsA/ComC is released in the presence of copper. In terms of biological role, represses expression of BhsA/ComC by binding to its promoter region in the absence of copper. The chain is HTH-type transcriptional repressor ComR (comR) from Escherichia coli (strain K12).